A 572-amino-acid chain; its full sequence is Receptor-transporting protein 5 (572 aa).

Residues 52–148 (SRLQCGHCPG…AYEGCCEACE (97 aa)) form a 3CxxC-type zinc finger. Residues 544 to 560 (FWIWVSMTVCVFWLMCM) traverse the membrane as a helical segment.

Its subcellular location is the membrane. This chain is Receptor-transporting protein 5 (RTP5), found in Homo sapiens (Human).